Here is a 275-residue protein sequence, read N- to C-terminus: Large ribosomal subunit protein uL2 (275 aa).

Residues 208-275 (AGAKRWRGRR…NMIIRDRRKK (68 aa)) are disordered. Composition is skewed to basic residues over residues 209–219 (GAKRWRGRRPT) and 254–263 (KGYKTRRNKR).

Belongs to the universal ribosomal protein uL2 family. Part of the 50S ribosomal subunit. Forms a bridge to the 30S subunit in the 70S ribosome.

Functionally, one of the primary rRNA binding proteins. Required for association of the 30S and 50S subunits to form the 70S ribosome, for tRNA binding and peptide bond formation. It has been suggested to have peptidyltransferase activity; this is somewhat controversial. Makes several contacts with the 16S rRNA in the 70S ribosome. The protein is Large ribosomal subunit protein uL2 of Coxiella burnetii (strain CbuK_Q154) (Coxiella burnetii (strain Q154)).